The primary structure comprises 104 residues: MNLGFLVGVFGVLILSHAAYSTIQYRGLLKIMEEEFSRPPINVILELIIGLALCMWAALTFPGKFLSIHPDSDENRAVFLPDNSDFMIFNHRGRLFPPQIDMKF.

Topologically, residues 1 to 2 (MN) are cytoplasmic. A helical transmembrane segment spans residues 3–23 (LGFLVGVFGVLILSHAAYSTI). The Lumenal portion of the chain corresponds to 24 to 40 (QYRGLLKIMEEEFSRPP). Residues 41–61 (INVILELIIGLALCMWAALTF) traverse the membrane as a helical segment. The Cytoplasmic segment spans residues 62–104 (PGKFLSIHPDSDENRAVFLPDNSDFMIFNHRGRLFPPQIDMKF).

The protein belongs to the membrane magnesium transporter (TC 1.A.67) family. Component of the ER membrane protein complex (EMC).

It is found in the endoplasmic reticulum membrane. Its subcellular location is the golgi apparatus membrane. It localises to the early endosome membrane. In terms of biological role, mediates Mg(2+) transport. This is Membrane magnesium transporter from Arabidopsis thaliana (Mouse-ear cress).